Consider the following 795-residue polypeptide: Phenylalanine--tRNA ligase beta subunit (795 aa).

In terms of domain architecture, tRNA-binding spans 39–148 (AAEFNGVVIG…LDAPLGTDLR (110 aa)). The B5 domain maps to 401–476 (PKPAQILLRR…RIYGYNNIPN (76 aa)). 4 residues coordinate Mg(2+): Asp454, Asp460, Glu463, and Glu464. The FDX-ACB domain maps to 701–794 (SKFPANRRDI…LKTEFNASLR (94 aa)).

Belongs to the phenylalanyl-tRNA synthetase beta subunit family. Type 1 subfamily. Tetramer of two alpha and two beta subunits. The cofactor is Mg(2+).

The protein resides in the cytoplasm. It carries out the reaction tRNA(Phe) + L-phenylalanine + ATP = L-phenylalanyl-tRNA(Phe) + AMP + diphosphate + H(+). This chain is Phenylalanine--tRNA ligase beta subunit, found in Shewanella oneidensis (strain ATCC 700550 / JCM 31522 / CIP 106686 / LMG 19005 / NCIMB 14063 / MR-1).